Here is a 337-residue protein sequence, read N- to C-terminus: Vacuolar protein sorting-associated protein 26B-B (337 aa).

The segment at 313–337 (RFEGTSHPETRPQHSGAAALEQEHE) is disordered.

This sequence belongs to the VPS26 family. As to quaternary structure, component of the heterotrimeric retromer cargo-selective complex (CSC) which is believed to associate with variable sorting nexins to form functionally distinct retromer complex variants.

It is found in the cytoplasm. Its subcellular location is the membrane. The protein resides in the endosome. Acts as a component of the retromer cargo-selective complex (CSC). The CSC is believed to be the core functional component of retromer or respective retromer complex variants acting to prevent missorting of selected transmembrane cargo proteins into the lysosomal degradation pathway. Retromer mediates retrograde transport of cargo proteins from endosomes to the trans-Golgi network (TGN). The chain is Vacuolar protein sorting-associated protein 26B-B (vps26b-b) from Xenopus laevis (African clawed frog).